The following is a 350-amino-acid chain: Histidinol-phosphate aminotransferase 1 (350 aa).

Lysine 211 carries the post-translational modification N6-(pyridoxal phosphate)lysine.

The protein belongs to the class-II pyridoxal-phosphate-dependent aminotransferase family. Histidinol-phosphate aminotransferase subfamily. Homodimer. The cofactor is pyridoxal 5'-phosphate.

The enzyme catalyses L-histidinol phosphate + 2-oxoglutarate = 3-(imidazol-4-yl)-2-oxopropyl phosphate + L-glutamate. Its pathway is amino-acid biosynthesis; L-histidine biosynthesis; L-histidine from 5-phospho-alpha-D-ribose 1-diphosphate: step 7/9. The protein is Histidinol-phosphate aminotransferase 1 of Trichormus variabilis (strain ATCC 29413 / PCC 7937) (Anabaena variabilis).